The primary structure comprises 462 residues: Adenosylhomocysteinase (462 aa).

Substrate-binding residues include Thr55, Asp128, and Glu188. 189–191 (TTT) provides a ligand contact to NAD(+). Lys218 and Asp222 together coordinate substrate. NAD(+) is bound by residues Asn223, 252–257 (GYGDVG), Glu275, Asn310, 331–333 (IGH), and Asn376.

This sequence belongs to the adenosylhomocysteinase family. Requires NAD(+) as cofactor.

The protein localises to the cytoplasm. It catalyses the reaction S-adenosyl-L-homocysteine + H2O = L-homocysteine + adenosine. It participates in amino-acid biosynthesis; L-homocysteine biosynthesis; L-homocysteine from S-adenosyl-L-homocysteine: step 1/1. In terms of biological role, may play a key role in the regulation of the intracellular concentration of adenosylhomocysteine. This is Adenosylhomocysteinase from Roseobacter denitrificans (strain ATCC 33942 / OCh 114) (Erythrobacter sp. (strain OCh 114)).